Consider the following 1732-residue polypeptide: Serine/threonine-protein kinase MRCK alpha (1732 aa).

The region spanning 77-343 is the Protein kinase domain; sequence FEILKVIGRG…IEDFKKHPFF (267 aa). ATP is bound by residues 83–91 and Lys-106; that span reads IGRGAFGEV. The active-site Proton acceptor is the Asp-201. 2 positions are modified to phosphoserine; by autocatalysis: Ser-222 and Ser-234. Thr-240 bears the Phosphothreonine; by autocatalysis mark. One can recognise an AGC-kinase C-terminal domain in the interval 344–414; that stretch reads SGIDWDNIRN…TSSCVLSDRS (71 aa). Coiled-coil stretches lie at residues 437–670, 713–820, and 880–943; these read NNLA…KQKQ, SEIK…WEAQ, and LELQ…SEKG. The segment at 973–1002 is disordered; sequence CTPAGKGRRIADSAPLPVHTPTLRKKGCPA. The Phorbol-ester/DAG-type zinc-finger motif lies at 1012–1062; sequence THQFFVKSFTAPTKCHQCTSLMVGLIRQGCSCEVCGFSCHITCVNKAPTTC. A PH domain is found at 1082-1201; the sequence is GTAYEGHVRI…WVGVLSELHK (120 aa). Ser-1127 carries the post-translational modification Phosphoserine. The CNH domain maps to 1227-1499; that stretch reads IKTTQAAAII…RPLNTEGSLN (273 aa). Ser-1545 bears the Phosphoserine mark. The region spanning 1571-1584 is the CRIB domain; sequence ISNPTNFNHIAHMG. Residues 1592-1732 form a disordered region; it reads LKDLPMNPRP…ESTDRGSWDP (141 aa). Polar residues predominate over residues 1604–1619; the sequence is SRTVFSGSVSIPSITK. Phosphoserine is present on residues Ser-1611, Ser-1613, Ser-1629, Ser-1651, Ser-1664, Ser-1669, Ser-1693, Ser-1719, and Ser-1721. Low complexity predominate over residues 1625–1640; that stretch reads GRSMSASSGLSARSSA. Residues 1665–1674 show a composition bias toward low complexity; that stretch reads PSEGSLSSGG.

The protein belongs to the protein kinase superfamily. AGC Ser/Thr protein kinase family. DMPK subfamily. As to quaternary structure, homodimer and homotetramer via the coiled coil regions. Interacts tightly with GTP-bound but not GDP-bound CDC42. Forms a tripartite complex with MYO18A and LURAP1 with the latter acting as an adapter connecting CDC42BPA and MYO18A. LURAP1 binding results in activation of CDC42BPA by abolition of its negative autoregulation. Interacts with LURAP1. Interacts (via AGC-kinase C-terminal domain) with FAM89B/LRAP25 (via LRR repeat). Forms a tripartite complex with FAM89B/LRAP25 and LIMK1. Mg(2+) serves as cofactor. Post-translationally, proteolytically cleaved by caspases upon apoptosis induction. The cleavage at Asp-478 by CASP3 increases its kinase activity (in vitro). As to expression, highly expressed in the brain and lung and present in lower levels in all other tissues tested.

The protein localises to the cytoplasm. Its subcellular location is the cell projection. It is found in the lamellipodium. The enzyme catalyses L-seryl-[protein] + ATP = O-phospho-L-seryl-[protein] + ADP + H(+). It catalyses the reaction L-threonyl-[protein] + ATP = O-phospho-L-threonyl-[protein] + ADP + H(+). Its activity is regulated as follows. Maintained in an inactive, closed conformation by an interaction between the kinase domain and the negative autoregulatory C-terminal coiled-coil region. Agonist binding to the phorbol ester binding site disrupts this, releasing the kinase domain to allow N-terminus-mediated dimerization and kinase activation by transautophosphorylation. Inhibited by chelerythrine chloride. In terms of biological role, serine/threonine-protein kinase which is an important downstream effector of CDC42 and plays a role in the regulation of cytoskeleton reorganization and cell migration. Regulates actin cytoskeletal reorganization via phosphorylation of PPP1R12A and MYL9/MLC2. In concert with MYO18A and LURAP1, is involved in modulating lamellar actomyosin retrograde flow that is crucial to cell protrusion and migration. Phosphorylates: PPP1R12C, LIMK1 and LIMK2. May play a role in TFRC-mediated iron uptake. In concert with FAM89B/LRAP25 mediates the targeting of LIMK1 to the lamellipodium resulting in its activation and subsequent phosphorylation of CFL1 which is important for lamellipodial F-actin regulation. Triggers the formation of an extrusion apical actin ring required for epithelial extrusion of apoptotic cells. In Rattus norvegicus (Rat), this protein is Serine/threonine-protein kinase MRCK alpha.